We begin with the raw amino-acid sequence, 454 residues long: UPF0210 protein Ppro_0613 (454 aa).

Belongs to the UPF0210 family. As to quaternary structure, homodimer.

The protein is UPF0210 protein Ppro_0613 of Pelobacter propionicus (strain DSM 2379 / NBRC 103807 / OttBd1).